The chain runs to 138 residues: Nucleoside diphosphate kinase (138 aa).

Residues K11, F59, R87, T93, R104, and N114 each coordinate ATP. The active-site Pros-phosphohistidine intermediate is H117.

Belongs to the NDK family. Mg(2+) serves as cofactor.

It localises to the cytoplasm. The enzyme catalyses a 2'-deoxyribonucleoside 5'-diphosphate + ATP = a 2'-deoxyribonucleoside 5'-triphosphate + ADP. The catalysed reaction is a ribonucleoside 5'-diphosphate + ATP = a ribonucleoside 5'-triphosphate + ADP. Major role in the synthesis of nucleoside triphosphates other than ATP. The ATP gamma phosphate is transferred to the NDP beta phosphate via a ping-pong mechanism, using a phosphorylated active-site intermediate. The polypeptide is Nucleoside diphosphate kinase (Saccharolobus islandicus (strain Y.N.15.51 / Yellowstone #2) (Sulfolobus islandicus)).